Reading from the N-terminus, the 504-residue chain is Anaerobic nitric oxide reductase transcription regulator NorR (504 aa).

The residue at position 57 (Asp-57) is a 4-aspartylphosphate. One can recognise a Sigma-54 factor interaction domain in the interval 187 to 416 (MIGLSPGMTQ…LEHAIHRAVV (230 aa)). ATP is bound by residues 215 to 222 (GETGTGKE) and 278 to 287 (ADNGTLFLDE). Positions 479 to 498 (WAACARMLETDVANLHRLAK) form a DNA-binding region, H-T-H motif.

It functions in the pathway nitrogen metabolism; nitric oxide reduction. Functionally, required for the expression of anaerobic nitric oxide (NO) reductase, acts as a transcriptional activator for at least the norVW operon. Activation also requires sigma-54. In Escherichia coli O139:H28 (strain E24377A / ETEC), this protein is Anaerobic nitric oxide reductase transcription regulator NorR.